We begin with the raw amino-acid sequence, 126 residues long: Large ribosomal subunit protein bL20 (126 aa).

Residues 1–15 show a composition bias toward basic residues; sequence MARVKRAVNAQKKRR. The segment at 1–20 is disordered; that stretch reads MARVKRAVNAQKKRRTTLER.

The protein belongs to the bacterial ribosomal protein bL20 family.

Binds directly to 23S ribosomal RNA and is necessary for the in vitro assembly process of the 50S ribosomal subunit. It is not involved in the protein synthesizing functions of that subunit. The polypeptide is Large ribosomal subunit protein bL20 (Beutenbergia cavernae (strain ATCC BAA-8 / DSM 12333 / CCUG 43141 / JCM 11478 / NBRC 16432 / NCIMB 13614 / HKI 0122)).